The chain runs to 514 residues: Peptide chain release factor 3 (514 aa).

In terms of domain architecture, tr-type G spans 8–268 (KKRRTFAIIS…TFLEFAPEPH (261 aa)). Residues 17–24 (SHPDAGKT), 85–89 (DTPGH), and 139–142 (NKLD) each bind GTP.

The protein belongs to the TRAFAC class translation factor GTPase superfamily. Classic translation factor GTPase family. PrfC subfamily.

It is found in the cytoplasm. Its function is as follows. Increases the formation of ribosomal termination complexes and stimulates activities of RF-1 and RF-2. It binds guanine nucleotides and has strong preference for UGA stop codons. It may interact directly with the ribosome. The stimulation of RF-1 and RF-2 is significantly reduced by GTP and GDP, but not by GMP. This is Peptide chain release factor 3 from Streptococcus pyogenes serotype M49 (strain NZ131).